Here is a 148-residue protein sequence, read N- to C-terminus: Nucleoside diphosphate kinase (148 aa).

Residues Lys-9, Phe-57, Arg-85, Thr-91, Arg-102, and Asn-112 each coordinate ATP. Thr-91 bears the Phosphothreonine mark. His-115 functions as the Pros-phosphohistidine intermediate in the catalytic mechanism. Ser-122 carries the phosphoserine modification.

This sequence belongs to the NDK family. In terms of assembly, homotetramer. Mg(2+) serves as cofactor.

It localises to the cytoplasm. It catalyses the reaction a 2'-deoxyribonucleoside 5'-diphosphate + ATP = a 2'-deoxyribonucleoside 5'-triphosphate + ADP. It carries out the reaction a ribonucleoside 5'-diphosphate + ATP = a ribonucleoside 5'-triphosphate + ADP. Functionally, major role in the synthesis of nucleoside triphosphates other than ATP. The ATP gamma phosphate is transferred to the NDP beta phosphate via a ping-pong mechanism, using a phosphorylated active-site intermediate. The sequence is that of Nucleoside diphosphate kinase from Bacillus cereus (strain ATCC 10987 / NRS 248).